The primary structure comprises 560 residues: Protein AATF (560 aa).

The residue at position 2 (Ala2) is an N-acetylalanine. Ser61 and Ser63 each carry phosphoserine. A disordered region spans residues 76-208 (TSRKAWNEDH…GDRNSEDDGV (133 aa)). A compositionally biased stretch (acidic residues) spans 94–129 (SDEEISDEEGSGDEDSEGLGLEEYDEDDLGAAEEQE). Phosphoserine occurs at positions 150 and 155. Over residues 156 to 165 (DFEKFTKGMD) the composition is skewed to basic and acidic residues. The segment covering 168–195 (GSSEEEEDEESGMEEGDDAEDSQGESEE) has biased composition (acidic residues). Ser203, Ser273, Ser316, Ser320, and Ser321 each carry phosphoserine. Residues 273-315 (SALKNSHKALKALLRSLVGLQEELLFQYPDTRYLVDGTKPNAG) are POLR2J binding. Positions 309–333 (GTKPNAGSEEISSEDDELVEEKKQQ) are disordered. The RB1 binding stretch occupies residues 316–372 (SEEISSEDDELVEEKKQQRRRVPAKRKLEMEDYPSFMAKRFADFTVYRNRTLQKWHD). Residues 373 to 472 (KTKLASGKLG…FYHQLLRELI (100 aa)) form an RB1 and SP1 binding region.

The protein belongs to the AATF family. Part of the small subunit (SSU) processome, composed of more than 70 proteins and the RNA chaperone small nucleolar RNA (snoRNA) U3. Interacts with POLR2J, RB1/RB, RBL1/P107 and RBL2/P130. Interacts with PAWR and SP1. May also bind MAPT. Post-translationally, hyperphosphorylated during the G1/S phase transition. In terms of tissue distribution, ubiquitously expressed. Expressed at high levels in brain, heart, kidney, placenta and thymus.

Its subcellular location is the nucleus. It is found in the nucleolus. Its function is as follows. Part of the small subunit (SSU) processome, first precursor of the small eukaryotic ribosomal subunit. During the assembly of the SSU processome in the nucleolus, many ribosome biogenesis factors, an RNA chaperone and ribosomal proteins associate with the nascent pre-rRNA and work in concert to generate RNA folding, modifications, rearrangements and cleavage as well as targeted degradation of pre-ribosomal RNA by the RNA exosome. May function as a general inhibitor of the histone deacetylase HDAC1. Binding to the pocket region of RB1 may displace HDAC1 from RB1/E2F complexes, leading to activation of E2F target genes and cell cycle progression. Conversely, displacement of HDAC1 from SP1 bound to the CDKN1A promoter leads to increased expression of this CDK inhibitor and blocks cell cycle progression. Also antagonizes PAWR mediated induction of aberrant amyloid peptide production in Alzheimer disease (presenile and senile dementia), although the molecular basis for this phenomenon has not been described to date. The polypeptide is Protein AATF (Homo sapiens (Human)).